The following is a 349-amino-acid chain: Phenylalanine--tRNA ligase alpha subunit (349 aa).

Glu262 serves as a coordination point for Mg(2+).

The protein belongs to the class-II aminoacyl-tRNA synthetase family. Phe-tRNA synthetase alpha subunit type 1 subfamily. Tetramer of two alpha and two beta subunits. Requires Mg(2+) as cofactor.

Its subcellular location is the cytoplasm. It catalyses the reaction tRNA(Phe) + L-phenylalanine + ATP = L-phenylalanyl-tRNA(Phe) + AMP + diphosphate + H(+). This Sorangium cellulosum (strain So ce56) (Polyangium cellulosum (strain So ce56)) protein is Phenylalanine--tRNA ligase alpha subunit.